We begin with the raw amino-acid sequence, 103 residues long: Large ribosomal subunit protein bL21 (103 aa).

This sequence belongs to the bacterial ribosomal protein bL21 family. As to quaternary structure, part of the 50S ribosomal subunit. Contacts protein L20.

Its function is as follows. This protein binds to 23S rRNA in the presence of protein L20. The sequence is that of Large ribosomal subunit protein bL21 from Aeromonas hydrophila subsp. hydrophila (strain ATCC 7966 / DSM 30187 / BCRC 13018 / CCUG 14551 / JCM 1027 / KCTC 2358 / NCIMB 9240 / NCTC 8049).